Consider the following 136-residue polypeptide: Holo-[acyl-carrier-protein] synthase (136 aa).

Mg(2+) contacts are provided by Asp-8 and Glu-57.

Belongs to the P-Pant transferase superfamily. AcpS family. Mg(2+) is required as a cofactor.

The protein resides in the cytoplasm. The catalysed reaction is apo-[ACP] + CoA = holo-[ACP] + adenosine 3',5'-bisphosphate + H(+). Its function is as follows. Transfers the 4'-phosphopantetheine moiety from coenzyme A to a Ser of acyl-carrier-protein. The polypeptide is Holo-[acyl-carrier-protein] synthase (Methylorubrum extorquens (strain PA1) (Methylobacterium extorquens)).